The primary structure comprises 314 residues: Hydroxyethylthiazole kinase (314 aa).

M70 serves as a coordination point for substrate. 2 residues coordinate ATP: R145 and S217. Position 244 (G244) interacts with substrate.

This sequence belongs to the Thz kinase family. It depends on Mg(2+) as a cofactor.

The catalysed reaction is 5-(2-hydroxyethyl)-4-methylthiazole + ATP = 4-methyl-5-(2-phosphooxyethyl)-thiazole + ADP + H(+). The protein operates within cofactor biosynthesis; thiamine diphosphate biosynthesis; 4-methyl-5-(2-phosphoethyl)-thiazole from 5-(2-hydroxyethyl)-4-methylthiazole: step 1/1. Catalyzes the phosphorylation of the hydroxyl group of 4-methyl-5-beta-hydroxyethylthiazole (THZ). The sequence is that of Hydroxyethylthiazole kinase from Bifidobacterium longum (strain DJO10A).